Here is a 311-residue protein sequence, read N- to C-terminus: tRNA(Ile)-lysidine synthase (311 aa).

Residue 32–37 participates in ATP binding; the sequence is SGGPDS.

The protein belongs to the tRNA(Ile)-lysidine synthase family.

It localises to the cytoplasm. It carries out the reaction cytidine(34) in tRNA(Ile2) + L-lysine + ATP = lysidine(34) in tRNA(Ile2) + AMP + diphosphate + H(+). Functionally, ligates lysine onto the cytidine present at position 34 of the AUA codon-specific tRNA(Ile) that contains the anticodon CAU, in an ATP-dependent manner. Cytidine is converted to lysidine, thus changing the amino acid specificity of the tRNA from methionine to isoleucine. This is tRNA(Ile)-lysidine synthase from Cutibacterium acnes (strain DSM 16379 / KPA171202) (Propionibacterium acnes).